The following is a 393-amino-acid chain: Argininosuccinate synthase (393 aa).

Residues 7–15 (AYSGGLDTS) and A34 each bind ATP. The L-citrulline site is built by Y85 and S90. G115 contributes to the ATP binding site. L-aspartate contacts are provided by T117, N121, and D122. L-citrulline is bound at residue N121. R125, S176, S185, E261, and Y273 together coordinate L-citrulline.

Belongs to the argininosuccinate synthase family. Type 1 subfamily. In terms of assembly, homotetramer.

Its subcellular location is the cytoplasm. The catalysed reaction is L-citrulline + L-aspartate + ATP = 2-(N(omega)-L-arginino)succinate + AMP + diphosphate + H(+). Its pathway is amino-acid biosynthesis; L-arginine biosynthesis; L-arginine from L-ornithine and carbamoyl phosphate: step 2/3. In Ehrlichia chaffeensis (strain ATCC CRL-10679 / Arkansas), this protein is Argininosuccinate synthase.